A 525-amino-acid chain; its full sequence is GMP synthase [glutamine-hydrolyzing] (525 aa).

Residues 9–207 form the Glutamine amidotransferase type-1 domain; it reads RILILDFGSQ…VRDICQCEAL (199 aa). C86 functions as the Nucleophile in the catalytic mechanism. Active-site residues include H181 and E183. In terms of domain architecture, GMPS ATP-PPase spans 208 to 400; the sequence is WTPAKIIDDA…LGLPYDMLYR (193 aa). 235–241 serves as a coordination point for ATP; sequence SGGVDSS.

In terms of assembly, homodimer.

The enzyme catalyses XMP + L-glutamine + ATP + H2O = GMP + L-glutamate + AMP + diphosphate + 2 H(+). It participates in purine metabolism; GMP biosynthesis; GMP from XMP (L-Gln route): step 1/1. In terms of biological role, catalyzes the synthesis of GMP from XMP. The chain is GMP synthase [glutamine-hydrolyzing] from Salmonella typhimurium (strain LT2 / SGSC1412 / ATCC 700720).